The following is a 515-amino-acid chain: Tyrosine decarboxylase 1 (515 aa).

2 consecutive repeat copies span residues 81–138 (DDIT…TELE) and 141–192 (VTDW…GKDQ). Positions 81-192 (DDITNHIVPG…KVLNKIGKDQ (112 aa)) are 2 X approximate tandem repeats. Residue Ala-105 participates in substrate binding. The pyridoxal 5'-phosphate site is built by Thr-169 and Cys-170. His-205 is a substrate binding site. Thr-264 and Asn-318 together coordinate pyridoxal 5'-phosphate. An N6-(pyridoxal phosphate)lysine modification is found at Lys-321.

This sequence belongs to the group II decarboxylase family. Pyridoxal 5'-phosphate serves as cofactor. As to expression, mostly expressed in bulbs, and, to a lower extent, in stems, roots, leaves and flowers.

The enzyme catalyses L-tyrosine + H(+) = tyramine + CO2. Its pathway is alkaloid biosynthesis. In terms of biological role, catalyzes the decarboxylation of L-tyrosine to tyramine, which is converted to norbelladine, a precursor to all Amaryllidaceae alkaloids such as galanthamine, lycorine and haemanthamine, and including haemanthamine- and crinamine-type alkaloids, promising anticancer agents. The protein is Tyrosine decarboxylase 1 of Narcissus pseudonarcissus (Daffodil).